We begin with the raw amino-acid sequence, 485 residues long: Probable glycine dehydrogenase (decarboxylating) subunit 2 (485 aa).

Position 273 is an N6-(pyridoxal phosphate)lysine (Lys-273).

Belongs to the GcvP family. C-terminal subunit subfamily. In terms of assembly, the glycine cleavage system is composed of four proteins: P, T, L and H. In this organism, the P 'protein' is a heterodimer of two subunits. Pyridoxal 5'-phosphate is required as a cofactor.

The catalysed reaction is N(6)-[(R)-lipoyl]-L-lysyl-[glycine-cleavage complex H protein] + glycine + H(+) = N(6)-[(R)-S(8)-aminomethyldihydrolipoyl]-L-lysyl-[glycine-cleavage complex H protein] + CO2. The glycine cleavage system catalyzes the degradation of glycine. The P protein binds the alpha-amino group of glycine through its pyridoxal phosphate cofactor; CO(2) is released and the remaining methylamine moiety is then transferred to the lipoamide cofactor of the H protein. This is Probable glycine dehydrogenase (decarboxylating) subunit 2 from Bacillus licheniformis (strain ATCC 14580 / DSM 13 / JCM 2505 / CCUG 7422 / NBRC 12200 / NCIMB 9375 / NCTC 10341 / NRRL NRS-1264 / Gibson 46).